A 58-amino-acid polypeptide reads, in one-letter code: Large ribosomal subunit protein uL30 (58 aa).

This sequence belongs to the universal ribosomal protein uL30 family. In terms of assembly, part of the 50S ribosomal subunit.

The protein is Large ribosomal subunit protein uL30 of Zymomonas mobilis subsp. mobilis (strain ATCC 31821 / ZM4 / CP4).